The primary structure comprises 297 residues: 33 kDa chaperonin (297 aa).

Intrachain disulfides connect cysteine 232/cysteine 234 and cysteine 266/cysteine 269.

This sequence belongs to the HSP33 family. Under oxidizing conditions two disulfide bonds are formed involving the reactive cysteines. Under reducing conditions zinc is bound to the reactive cysteines and the protein is inactive.

The protein localises to the cytoplasm. In terms of biological role, redox regulated molecular chaperone. Protects both thermally unfolding and oxidatively damaged proteins from irreversible aggregation. Plays an important role in the bacterial defense system toward oxidative stress. The polypeptide is 33 kDa chaperonin (Pseudomonas aeruginosa (strain LESB58)).